A 217-amino-acid polypeptide reads, in one-letter code: Coiled-coil domain-containing protein 124-A (217 aa).

The segment at 1–128 (MPKKFQGENT…HLEMPLEENV (128 aa)) is disordered. Composition is skewed to basic and acidic residues over residues 18–45 (RKAE…DDKH), 52–74 (RKED…QRLL), and 95–128 (TRAE…EENV). The stretch at 46–82 (VARKGQRKEDKEKKRLEQLERKKESQRLLDEEDSKMK) forms a coiled coil.

Belongs to the CCDC124 family. Associates with translationally inactive ribosomes in the nonrotated state.

It is found in the cytoplasm. The protein resides in the cytoskeleton. It localises to the microtubule organizing center. Its subcellular location is the centrosome. The protein localises to the midbody. Ribosome-binding protein involved in ribosome hibernation: associates with translationally inactive ribosomes and stabilizes the nonrotated conformation of the 80S ribosome, thereby promoting ribosome preservation and storage. The polypeptide is Coiled-coil domain-containing protein 124-A (ccdc124-a) (Xenopus laevis (African clawed frog)).